Consider the following 527-residue polypeptide: PTS system maltose-specific EIICB component (527 aa).

A PTS EIIC type-1 domain is found at 1 to 418 (MMQKIQRFGS…FNIATPGREK (418 aa)). 12 helical membrane passes run 8–28 (FGSA…IVGI), 59–79 (GWTV…VALA), 93–113 (VYLT…GAFG), 132–152 (IKTL…VVFL), 173–193 (YIVM…SYIW), 200–220 (IGSL…IYTF), 224–244 (ILIP…GPAV), 276–296 (FALH…AFYV), 305–325 (LVAG…ITEP), 326–346 (IEFT…VLAA), 357–377 (VVGN…IPLF), and 382–402 (MTYV…FFVF). The 79-residue stretch at 449–527 (DDTAFLYIEA…RERVEKILNQ (79 aa)) folds into the PTS EIIB type-1 domain. Cysteine 471 acts as the Phosphocysteine intermediate; for EIIB activity in catalysis.

It localises to the cell membrane. The enzyme catalyses D-maltose(out) + N(pros)-phospho-L-histidyl-[protein] = alpha-maltose 6'-phosphate(in) + L-histidyl-[protein]. The phosphoenolpyruvate-dependent sugar phosphotransferase system (sugar PTS), a major carbohydrate active transport system, catalyzes the phosphorylation of incoming sugar substrates concomitantly with their translocation across the cell membrane. This system is involved in maltose transport. The protein is PTS system maltose-specific EIICB component of Bacillus subtilis (strain 168).